Consider the following 255-residue polypeptide: Sulfur carrier protein FdhD (255 aa).

The active-site Cysteine persulfide intermediate is the Cys-103.

The protein belongs to the FdhD family.

It localises to the cytoplasm. In terms of biological role, required for formate dehydrogenase (FDH) activity. Acts as a sulfur carrier protein that transfers sulfur from IscS to the molybdenum cofactor prior to its insertion into FDH. The sequence is that of Sulfur carrier protein FdhD from Sulfurisphaera tokodaii (strain DSM 16993 / JCM 10545 / NBRC 100140 / 7) (Sulfolobus tokodaii).